The chain runs to 657 residues: Probable alpha-galactosidase D (657 aa).

Residues Met-1 to Gly-16 form the signal peptide. Residues Asn-47 and Asn-91 are each glycosylated (N-linked (GlcNAc...) asparagine). The cysteines at positions 124 and 157 are disulfide-linked. The active-site Nucleophile is Asp-155. Asn-182 and Asn-191 each carry an N-linked (GlcNAc...) asparagine glycan. Residue Glu-200–Asp-204 coordinates substrate. Residue Asp-222 is the Proton donor of the active site. Residues Asn-291, Asn-438, Asn-460, Asn-505, Asn-539, Asn-543, and Asn-582 are each glycosylated (N-linked (GlcNAc...) asparagine).

This sequence belongs to the glycosyl hydrolase 27 family.

Its subcellular location is the secreted. It catalyses the reaction Hydrolysis of terminal, non-reducing alpha-D-galactose residues in alpha-D-galactosides, including galactose oligosaccharides, galactomannans and galactolipids.. Hydrolyzes a variety of simple alpha-D-galactoside as well as more complex molecules such as oligosaccharides and polysaccharides. The sequence is that of Probable alpha-galactosidase D (aglD) from Aspergillus oryzae (strain ATCC 42149 / RIB 40) (Yellow koji mold).